A 230-amino-acid chain; its full sequence is Type II restriction enzyme SinI (230 aa).

The catalysed reaction is Endonucleolytic cleavage of DNA to give specific double-stranded fragments with terminal 5'-phosphates.. Its function is as follows. A P subtype restriction enzyme that recognizes the double-stranded sequence 5'-GGWCC-3' and cleaves after G-1. In Salmonella infantis, this protein is Type II restriction enzyme SinI (sinIR).